Consider the following 865-residue polypeptide: Bifunctional uridylyltransferase/uridylyl-removing enzyme (865 aa).

The uridylyltransferase stretch occupies residues 1–318 (MPHVDLNPLK…FPRPDSDARL (318 aa)). The interval 319 to 675 (IDDDFRNLRE…VRPTEHGEGL (357 aa)) is uridylyl-removing. The 123-residue stretch at 437–559 (VDQHTLAVVR…VGDERRLAAL (123 aa)) folds into the HD domain. 2 consecutive ACT domains span residues 676-762 (QVMV…RLPH) and 789-865 (RLSV…QQAA). The tract at residues 747-767 (DPHAARHAHAPRRLPHSHARR) is disordered. Positions 751–767 (ARHAHAPRRLPHSHARR) are enriched in basic residues.

Belongs to the GlnD family. The cofactor is Mg(2+).

The enzyme catalyses [protein-PII]-L-tyrosine + UTP = [protein-PII]-uridylyl-L-tyrosine + diphosphate. It catalyses the reaction [protein-PII]-uridylyl-L-tyrosine + H2O = [protein-PII]-L-tyrosine + UMP + H(+). With respect to regulation, uridylyltransferase (UTase) activity is inhibited by glutamine, while glutamine activates uridylyl-removing (UR) activity. In terms of biological role, modifies, by uridylylation and deuridylylation, the PII regulatory proteins (GlnB and homologs), in response to the nitrogen status of the cell that GlnD senses through the glutamine level. Under low glutamine levels, catalyzes the conversion of the PII proteins and UTP to PII-UMP and PPi, while under higher glutamine levels, GlnD hydrolyzes PII-UMP to PII and UMP (deuridylylation). Thus, controls uridylylation state and activity of the PII proteins, and plays an important role in the regulation of nitrogen assimilation and metabolism. In Bordetella bronchiseptica (strain ATCC BAA-588 / NCTC 13252 / RB50) (Alcaligenes bronchisepticus), this protein is Bifunctional uridylyltransferase/uridylyl-removing enzyme.